Consider the following 375-residue polypeptide: UDP-N-acetylglucosamine--N-acetylmuramyl-(pentapeptide) pyrophosphoryl-undecaprenol N-acetylglucosamine transferase (375 aa).

UDP-N-acetyl-alpha-D-glucosamine is bound by residues 13-15 (TGG), asparagine 124, arginine 165, serine 193, and glutamine 294.

It belongs to the glycosyltransferase 28 family. MurG subfamily.

It is found in the cell inner membrane. The enzyme catalyses di-trans,octa-cis-undecaprenyl diphospho-N-acetyl-alpha-D-muramoyl-L-alanyl-D-glutamyl-meso-2,6-diaminopimeloyl-D-alanyl-D-alanine + UDP-N-acetyl-alpha-D-glucosamine = di-trans,octa-cis-undecaprenyl diphospho-[N-acetyl-alpha-D-glucosaminyl-(1-&gt;4)]-N-acetyl-alpha-D-muramoyl-L-alanyl-D-glutamyl-meso-2,6-diaminopimeloyl-D-alanyl-D-alanine + UDP + H(+). Its pathway is cell wall biogenesis; peptidoglycan biosynthesis. Cell wall formation. Catalyzes the transfer of a GlcNAc subunit on undecaprenyl-pyrophosphoryl-MurNAc-pentapeptide (lipid intermediate I) to form undecaprenyl-pyrophosphoryl-MurNAc-(pentapeptide)GlcNAc (lipid intermediate II). The polypeptide is UDP-N-acetylglucosamine--N-acetylmuramyl-(pentapeptide) pyrophosphoryl-undecaprenol N-acetylglucosamine transferase (Mesorhizobium japonicum (strain LMG 29417 / CECT 9101 / MAFF 303099) (Mesorhizobium loti (strain MAFF 303099))).